The chain runs to 335 residues: Glutaredoxin-3 (335 aa).

At A2 the chain carries N-acetylalanine. A Thioredoxin domain is found at 2 to 117 (AAGAAEAAVA…LTKKVQRHAS (116 aa)). A phosphoserine mark is found at S117 and S120. Glutaredoxin domains follow at residues 144 to 236 (APCM…PKLE) and 237 to 335 (ERLK…RGEN). [2Fe-2S] cluster contacts are provided by C159 and C261.

Homodimer; the homodimer is independent of 2Fe-2S clusters. Heterotrimer; forms a heterotrimeric complex composed by two BOLA2 molecules and one GLRX3 molecule; linked by [2Fe-2S] clusters. Interacts (via N-terminus) with PRKCQ/PKC-theta. Interacts (via C-terminus) with CSRP3. Interacts with CSRP2. In terms of tissue distribution, expressed in heart, spleen, testis and, to a lower extent, in thymus and peripheral blood leukocytes. Weakly expressed in lung, placenta, colon and small intestine.

It localises to the cytoplasm. The protein resides in the cytosol. Its subcellular location is the cell cortex. The protein localises to the myofibril. It is found in the sarcomere. It localises to the z line. In terms of biological role, together with BOLA2, acts as a cytosolic iron-sulfur (Fe-S) cluster assembly factor that facilitates [2Fe-2S] cluster insertion into a subset of cytosolic proteins. Acts as a critical negative regulator of cardiac hypertrophy and a positive inotropic regulator. Required for hemoglobin maturation. Does not possess any thyoredoxin activity since it lacks the conserved motif that is essential for catalytic activity. The polypeptide is Glutaredoxin-3 (GLRX3) (Homo sapiens (Human)).